A 554-amino-acid chain; its full sequence is Neutral amino acid transporter 9 (554 aa).

Over 1–112 the chain is Cytoplasmic; that stretch reads MDSDQTPLIN…GSDGTGKNSS (112 aa). The chain crosses the membrane as a helical span at residues 113 to 133; sequence IVTIFMIWNTMMGTSILSIPW. Positions 122–127 are important for arginine binding and amino acid transport; it reads TMMGTS. Ser127 is an arginine binding site. Residues 134-139 are Lumenal-facing; the sequence is GIKQAG. The chain crosses the membrane as a helical span at residues 140-160; sequence FTTGVCILFLMGILTLYCCYR. Topologically, residues 161–191 are cytoplasmic; the sequence is VVKSRGTIPLTDTSNWEFPDVCQYYFGSFGR. A helical transmembrane segment spans residues 192-218; sequence WSSLLFSLVSLIGAMIVYWVLMSNFLF. At 219 to 276 the chain is on the lumenal side; the sequence is NTGKFIYNYVNDVNVTDDVLSNNGSDKVICPNPDSTRPLNKSMDTYFGNGTNYEQFET. Asn232, Asn241, Asn258, and Asn267 each carry an N-linked (GlcNAc...) asparagine glycan. The cysteines at positions 248 and 417 are disulfide-linked. Residues 277-293 traverse the membrane as a helical segment; that stretch reads WWSKTNTVPFYLVVLLL. Residues 294–302 are Cytoplasmic-facing; the sequence is PLLSFRSPS. A helical membrane pass occupies residues 303-327; the sequence is FFAKFNILGTVSIIYLVSLVTLKAA. The Lumenal portion of the chain corresponds to 328–349; it reads HLGFHLRFSWNQVQEFFVPEFR. Residues 350-370 form a helical membrane-spanning segment; sequence LSFPQLTGILTLAFFIHNCII. The Cytoplasmic portion of the chain corresponds to 371–387; that stretch reads TLLKNNRNQKNNVRDLS. Residues 388 to 408 traverse the membrane as a helical segment; it reads IAYLLVGLTYIYVGVAVFASF. The Lumenal segment spans residues 409–430; it reads PSPPLSKQCIQQNFLDNFPSSD. Residues 431-451 form a helical membrane-spanning segment; that stretch reads ILAFVARIFLLFQMMTVYPLL. Residues 437–447 carry the CARC motif motif; that stretch reads RIFLLFQMMTV. The CRAC motif signature appears at 450–456; that stretch reads LLGYLVR. Residues 452 to 472 are Cytoplasmic-facing; the sequence is GYLVRVQLLGHIFGDIYPSVF. A helical membrane pass occupies residues 473 to 493; sequence HVLALNIAVVGVGVIMARFYP. Topologically, residues 494-500 are lumenal; that stretch reads NIGGIIR. The chain crosses the membrane as a helical span at residues 501-521; sequence FSGAACGLAFVFVYPSLIHMI. Topologically, residues 522 to 533 are cytoplasmic; it reads SLHRRGQLKVHS. The chain crosses the membrane as a helical span at residues 534 to 554; sequence ILIHVSIIVLGIANLIAQFFM.

This sequence belongs to the amino acid/polyamine transporter 2 family. SLC38A9 subfamily. As to quaternary structure, associated component of the Ragulator complex. Associated component of the Rag GTPases heterodimers. In terms of processing, glycosylated.

Its subcellular location is the lysosome membrane. The protein resides in the late endosome membrane. It carries out the reaction L-leucine(in) = L-leucine(out). It catalyses the reaction L-tyrosine(in) = L-tyrosine(out). The enzyme catalyses L-glutamine(out) = L-glutamine(in). The catalysed reaction is L-asparagine(out) = L-asparagine(in). Lysosomal amino acid transporter involved in the activation of mTORC1 in response to amino acid levels. Probably acts as an amino acid sensor of the Rag GTPases and Ragulator complexes, 2 complexes involved in amino acid sensing and activation of mTORC1, a signaling complex promoting cell growth in response to growth factors, energy levels, and amino acids. Following activation by amino acids, the Ragulator and Rag GTPases function as a scaffold recruiting mTORC1 to lysosomes where it is in turn activated. SLC38A9 mediates transport of amino acids with low capacity and specificity with a slight preference for polar amino acids. Acts as an arginine sensor. Following activation by arginine binding, mediates transport of L-glutamine, leucine and tyrosine with high efficiency, and is required for the efficient utilization of these amino acids after lysosomal protein degradation. However, the transport mechanism is not well defined and the role of sodium is not clear. Guanine exchange factor (GEF) that, upon arginine binding, stimulates GDP release from RRAGA and therefore activates the Rag GTPase heterodimer and the mTORC1 pathway in response to nutrient sufficiency. The sequence is that of Neutral amino acid transporter 9 from Xenopus tropicalis (Western clawed frog).